The chain runs to 476 residues: Glycogen synthase (476 aa).

ADP-alpha-D-glucose is bound at residue Lys-15.

The protein belongs to the glycosyltransferase 1 family. Bacterial/plant glycogen synthase subfamily.

The catalysed reaction is [(1-&gt;4)-alpha-D-glucosyl](n) + ADP-alpha-D-glucose = [(1-&gt;4)-alpha-D-glucosyl](n+1) + ADP + H(+). It functions in the pathway glycan biosynthesis; glycogen biosynthesis. Synthesizes alpha-1,4-glucan chains using ADP-glucose. This is Glycogen synthase from Streptococcus equi subsp. zooepidemicus (strain H70).